The primary structure comprises 62 residues: Large ribosomal subunit protein uL30 (62 aa).

This sequence belongs to the universal ribosomal protein uL30 family. Part of the 50S ribosomal subunit.

This chain is Large ribosomal subunit protein uL30, found in Thioalkalivibrio sulfidiphilus (strain HL-EbGR7).